A 294-amino-acid polypeptide reads, in one-letter code: KGYQYLPVVLKVIAMTTIKNVSEHQAGICVTMSVKLPAILTRQLAQTSCPSLPDPMNRYGYLAPQYGGLRIRACPSGTIYSENQCRYKSNMNGNGGLRGSARKQFRQCSAEFKINFDDGFKDISKGGLAFDYSHISLRRGKGVFVGNSKLYIWGFQSRFLGKTFAIRMKVKIKRGAGKYRPEPIISNCGPNGDSSVEIVVHRGKVIFKAKTSDNPEAVFITEDYDDDKWTDLTYYYDGNHFGGSCNGRPFRQRTGGNLEIRDNPMTIGLCTGQNGFHGEIDELEIYTACIPKDM.

In terms of tissue distribution, component of the organic matrix of calcified shell layers like nacre and prisms.

The protein localises to the secreted. The protein is Shell matrix protein of Mytilus californianus (California mussel).